We begin with the raw amino-acid sequence, 157 residues long: 2-C-methyl-D-erythritol 2,4-cyclodiphosphate synthase (157 aa).

Residues aspartate 8 and histidine 10 each coordinate a divalent metal cation. 4-CDP-2-C-methyl-D-erythritol 2-phosphate contacts are provided by residues 8 to 10 (DVH) and 34 to 35 (HS). A divalent metal cation is bound at residue histidine 42. Residues 56 to 58 (DIG), 61 to 65 (FPDTD), 100 to 106 (AQAPKML), 132 to 135 (TTTE), phenylalanine 139, and arginine 142 contribute to the 4-CDP-2-C-methyl-D-erythritol 2-phosphate site.

The protein belongs to the IspF family. As to quaternary structure, homotrimer. The cofactor is a divalent metal cation.

The enzyme catalyses 4-CDP-2-C-methyl-D-erythritol 2-phosphate = 2-C-methyl-D-erythritol 2,4-cyclic diphosphate + CMP. It participates in isoprenoid biosynthesis; isopentenyl diphosphate biosynthesis via DXP pathway; isopentenyl diphosphate from 1-deoxy-D-xylulose 5-phosphate: step 4/6. In terms of biological role, involved in the biosynthesis of isopentenyl diphosphate (IPP) and dimethylallyl diphosphate (DMAPP), two major building blocks of isoprenoid compounds. Catalyzes the conversion of 4-diphosphocytidyl-2-C-methyl-D-erythritol 2-phosphate (CDP-ME2P) to 2-C-methyl-D-erythritol 2,4-cyclodiphosphate (ME-CPP) with a corresponding release of cytidine 5-monophosphate (CMP). The protein is 2-C-methyl-D-erythritol 2,4-cyclodiphosphate synthase of Erwinia tasmaniensis (strain DSM 17950 / CFBP 7177 / CIP 109463 / NCPPB 4357 / Et1/99).